The sequence spans 311 residues: Dehydrogenase/reductase SDR family member 7C (311 aa).

The first 18 residues, Met1–Gly18, serve as a signal peptide directing secretion. Residues Ser47, Leu49, Tyr191, Lys195, and Ser226 each contribute to the NAD(+) site. The active-site Proton acceptor is Tyr191.

Belongs to the short-chain dehydrogenases/reductases (SDR) family.

It is found in the sarcoplasmic reticulum membrane. It carries out the reaction all-trans-retinol + NAD(+) = all-trans-retinal + NADH + H(+). In terms of biological role, NADH-dependent oxidoreductase which catalyzes the oxidation of all-trans-retinol to all-trans-retinal. Plays a role in the regulation of cardiac and skeletal muscle metabolic functions. Maintains Ca(2+) intracellular homeostasis by repressing Ca(2+) release from the sarcoplasmic reticulum (SR) in myotubes, possibly through local alternations in NAD/NADH or retinol/retinal. Also plays a role in Ca(2+) homeostasis by controlling Ca(2+) overload in the cytosol and the SR in myotubes. Involved in glucose uptake into skeletal muscles and muscle performance by activating PI3K and mTORC2-mediated AKT1 phosphorylation signaling pathways, possibly through the action of its downstream catalytic product all-trans-retinoic acid. The sequence is that of Dehydrogenase/reductase SDR family member 7C (DHRS7C) from Bos taurus (Bovine).